Consider the following 483-residue polypeptide: Chromatin structure-remodeling complex protein RSC6 (483 aa).

Disordered stretches follow at residues 142–183 and 273–309; these read KRKR…EAES and AQDGSNDAEDSSNENNNKNGAGDDDGVEGSTPKDKPE. Low complexity predominate over residues 148-158; sequence SLSLPLNLQQP. The span at 171 to 180 shows a compositional bias: acidic residues; that stretch reads DNGEDEDSAE.

The protein to yeast SNF12. Interacts directly with RSC8. Component of the two forms of the RSC complex composed of at least either RSC1 or RSC2, and ARP7, ARP9, LDB7, NPL6, RSC3, RSC30, RSC4, RSC58, RSC6, RSC8, RSC9, SFH1, STH1, HTL1 and probably RTT102. The complexes interact with histone and histone variant components of centromeric chromatin.

It is found in the nucleus. Its function is as follows. Component of the chromatin structure-remodeling complex (RSC), which is involved in transcription regulation and nucleosome positioning. RSC is responsible for the transfer of a histone octamer from a nucleosome core particle to naked DNA. The reaction requires ATP and involves an activated RSC-nucleosome intermediate. Remodeling reaction also involves DNA translocation, DNA twist and conformational change. As a reconfigurer of centromeric and flanking nucleosomes, RSC complex is required both for proper kinetochore function in chromosome segregation and, via a PKC1-dependent signaling pathway, for organization of the cellular cytoskeleton. This subunit is essential for mitotic growth and suppresses formamide sensitivity of the RSC8 mutants. The chain is Chromatin structure-remodeling complex protein RSC6 (RSC6) from Saccharomyces cerevisiae (strain ATCC 204508 / S288c) (Baker's yeast).